The following is a 392-amino-acid chain: Imidazolonepropionase (392 aa).

Positions 70 and 72 each coordinate Fe(3+). Residues H70 and H72 each coordinate Zn(2+). The 4-imidazolone-5-propanoate site is built by R79, Y137, and H164. Y137 contacts N-formimidoyl-L-glutamate. H227 contributes to the Fe(3+) binding site. A Zn(2+)-binding site is contributed by H227. Q230 contacts 4-imidazolone-5-propanoate. A Fe(3+)-binding site is contributed by D301. D301 contacts Zn(2+). Residues N303 and G305 each contribute to the N-formimidoyl-L-glutamate site. T306 lines the 4-imidazolone-5-propanoate pocket.

Belongs to the metallo-dependent hydrolases superfamily. HutI family. Zn(2+) serves as cofactor. Requires Fe(3+) as cofactor.

The protein resides in the cytoplasm. The enzyme catalyses 4-imidazolone-5-propanoate + H2O = N-formimidoyl-L-glutamate. It functions in the pathway amino-acid degradation; L-histidine degradation into L-glutamate; N-formimidoyl-L-glutamate from L-histidine: step 3/3. Catalyzes the hydrolytic cleavage of the carbon-nitrogen bond in imidazolone-5-propanoate to yield N-formimidoyl-L-glutamate. It is the third step in the universal histidine degradation pathway. The chain is Imidazolonepropionase from Nocardia farcinica (strain IFM 10152).